Here is a 139-residue protein sequence, read N- to C-terminus: Putative esterase PM0788 (139 aa).

Belongs to the thioesterase PaaI family.

In Pasteurella multocida (strain Pm70), this protein is Putative esterase PM0788.